Consider the following 89-residue polypeptide: Putative acyl-CoA-binding protein (89 aa).

Positions 3–88 constitute an ACB domain; sequence VEEQFKTSAE…VKELVEKNGL (86 aa). Residues K15, 30-34, K52, K56, and Y75 contribute to the an acyl-CoA site; that span reads YSLYK.

It belongs to the ACBP family.

Functionally, binds medium- and long-chain acyl-CoA esters with very high affinity and may function as an intracellular carrier of acyl-CoA esters. In Hypsibius exemplaris (Freshwater tardigrade), this protein is Putative acyl-CoA-binding protein.